The chain runs to 447 residues: Argininosuccinate synthase (447 aa).

ATP is bound by residues 17–25 (AFSGGLDTS) and Ala43. Tyr99 serves as a coordination point for L-citrulline. ATP contacts are provided by Gly129 and Thr131. L-aspartate-binding residues include Thr131, Asn135, and Asp136. Asn135 is a binding site for L-citrulline. Residue Asp136 coordinates ATP. Positions 139 and 192 each coordinate L-citrulline. Residue Asp194 coordinates ATP. Positions 201, 203, and 280 each coordinate L-citrulline.

Belongs to the argininosuccinate synthase family. Type 2 subfamily. Homotetramer.

It is found in the cytoplasm. The catalysed reaction is L-citrulline + L-aspartate + ATP = 2-(N(omega)-L-arginino)succinate + AMP + diphosphate + H(+). It functions in the pathway amino-acid biosynthesis; L-arginine biosynthesis; L-arginine from L-ornithine and carbamoyl phosphate: step 2/3. This Shigella boydii serotype 18 (strain CDC 3083-94 / BS512) protein is Argininosuccinate synthase.